Here is a 290-residue protein sequence, read N- to C-terminus: Glycine--tRNA ligase alpha subunit (290 aa).

This sequence belongs to the class-II aminoacyl-tRNA synthetase family. As to quaternary structure, tetramer of two alpha and two beta subunits.

It localises to the cytoplasm. The enzyme catalyses tRNA(Gly) + glycine + ATP = glycyl-tRNA(Gly) + AMP + diphosphate. This Fusobacterium nucleatum subsp. nucleatum (strain ATCC 25586 / DSM 15643 / BCRC 10681 / CIP 101130 / JCM 8532 / KCTC 2640 / LMG 13131 / VPI 4355) protein is Glycine--tRNA ligase alpha subunit.